The primary structure comprises 289 residues: Ribonuclease H2 subunit A (289 aa).

Positions 20–249 constitute an RNase H type-2 domain; sequence PFVMGIDEAG…TETAMRGACF (230 aa). A divalent metal cation contacts are provided by Asp-26, Glu-27, and Asp-134.

It belongs to the RNase HII family. Eukaryotic subfamily. The cofactor is Mn(2+). Mg(2+) serves as cofactor.

It catalyses the reaction Endonucleolytic cleavage to 5'-phosphomonoester.. In terms of biological role, endonuclease that specifically degrades the RNA of RNA-DNA hybrids. Participates in DNA replication. The protein is Ribonuclease H2 subunit A (rnaseh2A) of Dictyostelium discoideum (Social amoeba).